The chain runs to 485 residues: Apolipoprotein N-acyltransferase (485 aa).

6 helical membrane-spanning segments follow: residues 8–28 (IAGA…IAFV), 49–69 (GWLF…VSIH), 76–96 (VPLA…FIAF), 121–141 (WWVV…WLFL), 157–177 (FGIY…YLLV), and 186–206 (IMCL…TFIP). A CN hydrolase domain is found at 220–457 (VQGNIGQRLK…RLLLTGQIKP (238 aa)). Glu259 serves as the catalytic Proton acceptor. The active site involves Lys317. Cys369 serves as the catalytic Nucleophile. Residues 464–484 (LMRWNYYPVVGIIIIFLLLTF) traverse the membrane as a helical segment.

This sequence belongs to the CN hydrolase family. Apolipoprotein N-acyltransferase subfamily.

The protein localises to the cell inner membrane. The enzyme catalyses N-terminal S-1,2-diacyl-sn-glyceryl-L-cysteinyl-[lipoprotein] + a glycerophospholipid = N-acyl-S-1,2-diacyl-sn-glyceryl-L-cysteinyl-[lipoprotein] + a 2-acyl-sn-glycero-3-phospholipid + H(+). Its pathway is protein modification; lipoprotein biosynthesis (N-acyl transfer). Its function is as follows. Catalyzes the phospholipid dependent N-acylation of the N-terminal cysteine of apolipoprotein, the last step in lipoprotein maturation. The polypeptide is Apolipoprotein N-acyltransferase (Coxiella burnetii (strain RSA 493 / Nine Mile phase I)).